The following is a 184-amino-acid chain: Dirigent protein 14 (184 aa).

A signal peptide spans 1–20 (MANQIYLFSLICLSVLLCQS). A disulfide bridge connects residues Cys36 and Cys182. N-linked (GlcNAc...) asparagine glycans are attached at residues Asn55 and Asn119.

Belongs to the plant dirigent protein family. Homodimer.

Its subcellular location is the secreted. It localises to the extracellular space. The protein localises to the apoplast. In terms of biological role, dirigent proteins impart stereoselectivity on the phenoxy radical-coupling reaction, yielding optically active lignans from two molecules of coniferyl alcohol in the biosynthesis of lignans, flavonolignans, and alkaloids and thus plays a central role in plant secondary metabolism. The protein is Dirigent protein 14 (DIR14) of Arabidopsis thaliana (Mouse-ear cress).